The sequence spans 566 residues: Beta-1,2-xylosyltransferease XAX1 (566 aa).

Positions 1 to 25 (MTSTAYSRPSKLPGGGNGSDRRLPP) are disordered. Topologically, residues 1–43 (MTSTAYSRPSKLPGGGNGSDRRLPPRLMRGLTTKIEPKKLGVG) are cytoplasmic. Residues 44–64 (LLAGCCLALLTYVSLAKLFAI) traverse the membrane as a helical; Signal-anchor for type II membrane protein segment. The Lumenal segment spans residues 65 to 566 (YSPVFASTAN…LLQALDRLQQ (502 aa)). N74 carries N-linked (GlcNAc...) asparagine glycosylation. Residues 78–180 (LMQNSPPSSP…AAGGDTKIKC (103 aa)) are disordered. Residues 84 to 94 (PSSPETGPIPP) show a composition bias toward pro residues. 5 N-linked (GlcNAc...) asparagine glycosylation sites follow: N104, N368, N429, N515, and N549.

The protein belongs to the glycosyltransferase 61 family. As to expression, highly expressed in young panicles.

It is found in the golgi apparatus membrane. It functions in the pathway glycan metabolism. Its function is as follows. Glycosyltransferase involved in the xylosylation of xylan, the major hemicellulose (non-cellulosic component) of primary and secondary walls of angiosperms. Possesses beta-1,2-xylosyltransferase activity, transferring xylose from UDP-xylose to the xylan backbone. This is Beta-1,2-xylosyltransferease XAX1 from Oryza sativa subsp. japonica (Rice).